The chain runs to 551 residues: Chloride channel CLIC-like protein 1 (551 aa).

The signal sequence occupies residues 1 to 18; sequence MLCSLLLCECLLLVAGYA. The Lumenal portion of the chain corresponds to 19–184; that stretch reads HDDDWIDPTD…EDSFGVDPYN (166 aa). The chain crosses the membrane as a helical span at residues 185–205; that stretch reads VLMVLLCLLCIVVLVATELWT. At 206-216 the chain is on the cytoplasmic side; the sequence is YVRWYTQLRRV. A helical transmembrane segment spans residues 217 to 237; it reads LIISFLFSLGWNWMYLYKLAF. Residues 238 to 329 lie on the Lumenal side of the membrane; the sequence is AQHQAEVAKM…GEFIKALMKE (92 aa). Residues 330–350 traverse the membrane as a helical segment; it reads IPALLHLPVLIIMALAILSFC. Residues 351–551 are Cytoplasmic-facing; it reads YGAGKSVHVL…GQDPVSSPCG (201 aa). Residues 363-415 form a disordered region; that stretch reads IGGPESEPPQALRPRDRRRQEEIDYRPDGGAGDADFHYRGQMGPTEQGPYAKT. The span at 380–389 shows a compositional bias: basic and acidic residues; that stretch reads RRQEEIDYRP. Ser-438 and Ser-464 each carry phosphoserine. A disordered region spans residues 447 to 551; that stretch reads VPDAEAREHP…GQDPVSSPCG (105 aa). At Thr-482 the chain carries Phosphothreonine. Positions 488-508 are enriched in polar residues; that stretch reads TESSQSAKPVSGQDTSGNTEG. Residues Ser-509, Ser-524, and Ser-532 each carry the phosphoserine modification.

This sequence belongs to the chloride channel MCLC family. In terms of assembly, homomultimers. Interacts with mitochondrial protein PIGBOS1 (via C-terminus); the interaction occurs at the mitochondria-associated endoplasmic reticulum (ER) membrane, a zone of contact between the ER and mitochondrial membranes, but does not appear to play a role in ER-mitochondria tethering and is not affected by ER stress. Interacts with CALR. As to expression, expressed in the retina of the eye, with extensive expression in the lamina cribrosa, optic nerve, ganglion cell layer, inner nuclear layer, outer nuclear layer and retinal pigment epithelium.

Its subcellular location is the endoplasmic reticulum membrane. It carries out the reaction chloride(in) = chloride(out). The enzyme catalyses bromide(in) = bromide(out). The catalysed reaction is nitrate(in) = nitrate(out). It catalyses the reaction fluoride(in) = fluoride(out). With respect to regulation, inhibited by ER lumenal Ca(2+). Its function is as follows. Anion-selective channel with Ca(2+)-dependent and voltage-independent gating. Permeable to small monovalent anions with selectivity for bromide &gt; chloride &gt; nitrate &gt; fluoride. Operates in the endoplasmic reticulum (ER) membrane where it mediates chloride efflux to compensate for the loss of positive charges from the ER lumen upon Ca(2+) release. Contributes to the maintenance of ER Ca(2+) pools and activation of unfolded protein response to prevent accumulation of misfolded proteins in the ER lumen. Particularly involved in ER homeostasis mechanisms underlying motor neurons and retinal photoreceptors survival. The sequence is that of Chloride channel CLIC-like protein 1 from Homo sapiens (Human).